The sequence spans 107 residues: Anti-adapter protein IraM (107 aa).

Belongs to the IraM/RssC family.

Its subcellular location is the cytoplasm. Functionally, inhibits RpoS proteolysis by regulating RssB activity, thereby increasing the stability of the sigma stress factor RpoS during magnesium starvation. This chain is Anti-adapter protein IraM, found in Escherichia coli O7:K1 (strain IAI39 / ExPEC).